We begin with the raw amino-acid sequence, 140 residues long: Interleukin-4 (140 aa).

The signal sequence occupies residues 1 to 20; it reads MGLNPQLVVILLFFLECTRS. Disulfide bonds link C25/C107, C47/C87, and C69/C114. N-linked (GlcNAc...) asparagine glycans are attached at residues N61, N91, and N117.

It belongs to the IL-4/IL-13 family. As to quaternary structure, interacts with IL4R. Interacts with IL13RA1.

The protein resides in the secreted. Its function is as follows. Cytokine secreted primarily by mast cells, T-cells, eosinophils, and basophils that plays a role in regulating antibody production, hematopoiesis and inflammation, and the development of effector T-cell responses. Induces the expression of class II MHC molecules on resting B-cells. Enhances both secretion and cell surface expression of IgE and IgG1. Also regulates the expression of the low affinity Fc receptor for IgE (CD23) on both lymphocytes and monocytes. Positively regulates IL31RA expression in macrophages. Stimulates autophagy in dendritic cells by interfering with mTORC1 signaling and through the induction of RUFY4. In addition, plays a critical role in higher functions of the normal brain, such as memory and learning. Upon binding to IL4, IL4R receptor dimerizes either with the common IL2R gamma chain/IL2RG to produce the type 1 signaling complex, located mainly on hematopoietic cells, or with the IL13RA1 to produce the type 2 complex, which is also expressed on nonhematopoietic cells. Engagement of both types of receptors initiates JAK3 and to a lower extend JAK1 phosphorylation leading to activation of the signal transducer and activator of transcription 6/STAT6. The polypeptide is Interleukin-4 (Il4) (Mus musculus (Mouse)).